The chain runs to 287 residues: UPF0761 membrane protein MS0032 (287 aa).

A run of 6 helical transmembrane segments spans residues 37-57 (MLAI…FPMF), 93-113 (SMSA…INQI), 128-148 (FIFS…FIGM), 174-194 (LLSF…YTLV), 204-224 (AAVG…AFAW), and 238-258 (AMAT…FILL).

The protein belongs to the UPF0761 family.

It is found in the cell inner membrane. The chain is UPF0761 membrane protein MS0032 from Mannheimia succiniciproducens (strain KCTC 0769BP / MBEL55E).